Consider the following 193-residue polypeptide: Non-specific lipid transfer protein GPI-anchored 2 (193 aa).

The first 22 residues, 1 to 22, serve as a signal peptide directing secretion; it reads MSNVVVIAVVLIVASLTGHVSA. 4 cysteine pairs are disulfide-bonded: cysteine 38/cysteine 83, cysteine 48/cysteine 67, cysteine 68/cysteine 110, and cysteine 81/cysteine 120. Asparagine 44 carries an N-linked (GlcNAc...) asparagine glycan. Positions 143–164 are disordered; sequence APGSMSGAESPGGFGSGPSASR. A lipid anchor (GPI-anchor amidated glycine) is attached at glycine 165. A propeptide spans 166–193 (removed in mature form); it reads SDAPSSAPYSLFLNLIIFPLAFAFYIFC.

The protein belongs to the plant LTP family. O-glycosylated on hydroxyprolines; noncontiguous hydroxylproline residues are glycosylated with arabinogalactan. As to expression, up-regulated in the epidermis of top stems. Expressed in roots, cotyledons, seedlings, leaves, stems, buds, flower and silique walls. Preferentially expressed in the shoot apical meristem and the root meristem. Also detected in expanding leaves and petals, developing flowers, and elongating pistils, stamens and siliques.

It localises to the cell membrane. Functionally, lipid transfer protein that, together with LTPG1, binds to lipids and functions as a component of the cuticular lipid export machinery that performs extensive export of intracellular lipids (e.g. C29 alkane) from epidermal cells to the surface to build the cuticular wax layer and silique walls. Contributes to pre-invasive defense against some non-host powdery mildew pathogens by preventing the penetration of the epidermal cell wall by the fungal agents (e.g. Blumeria graminis f. sp. hordei (Bgh)). Involved in seed and ovule maturation and development, probably by regulating the fatty acids homeostasis during suberin and sporopollenin biosynthesis or deposition. In Arabidopsis thaliana (Mouse-ear cress), this protein is Non-specific lipid transfer protein GPI-anchored 2.